Here is a 358-residue protein sequence, read N- to C-terminus: Glyoxylate/succinic semialdehyde reductase 2, chloroplastic (358 aa).

Residues 1–44 (MPLVSLSFASSSSKAMALCSICPRIPLRFRPKPISPFLSKPQIC) constitute a chloroplast transit peptide. NADP(+)-binding positions include 70–84 (GFLG…MAQN) and threonine 161. Lysine 236 is an active-site residue. Lysine 304 contributes to the NADP(+) binding site.

It belongs to the HIBADH-related family. NP60 subfamily.

The protein localises to the plastid. It localises to the chloroplast stroma. The enzyme catalyses glycolate + NADP(+) = glyoxylate + NADPH + H(+). It carries out the reaction 4-hydroxybutanoate + NADP(+) = succinate semialdehyde + NADPH + H(+). Its activity is regulated as follows. The ratio of NADPH/NADP(+) may regulate enzymatic activity. Functionally, catalyzes the NADPH-dependent reduction of glyoxylate to glycolate as well as succinic semialdehyde (SSA) to gamma-hydroxybutyrate in vitro. May function in redox homeostasis and play a role in oxidative stress tolerance by detoxifying glyoxylate and SSA generated in glycolate metabolism and GABA metabolism, respectively. This chain is Glyoxylate/succinic semialdehyde reductase 2, chloroplastic (GLYR2), found in Arabidopsis thaliana (Mouse-ear cress).